The following is a 186-amino-acid chain: Elongation factor P (186 aa).

It belongs to the elongation factor P family.

The protein resides in the cytoplasm. The protein operates within protein biosynthesis; polypeptide chain elongation. Functionally, involved in peptide bond synthesis. Stimulates efficient translation and peptide-bond synthesis on native or reconstituted 70S ribosomes in vitro. Probably functions indirectly by altering the affinity of the ribosome for aminoacyl-tRNA, thus increasing their reactivity as acceptors for peptidyl transferase. This chain is Elongation factor P, found in Prochlorococcus marinus (strain SARG / CCMP1375 / SS120).